The primary structure comprises 359 residues: Putative nucleotidyltransferase MAB21L1 (359 aa).

A ribonucleoside 5'-triphosphate contacts are provided by residues 23–24 (RK) and 63–66 (YEGL). Residues E73 and E75 each contribute to the Mg(2+) site. A ribonucleoside 5'-triphosphate-binding positions include K248 and 252–255 (SILK).

The protein belongs to the mab-21 family. Monomer. Homodecamer; composed of 2 back to back homopentamers. The protein may exist as monomer in solution and oiligomerizes upon ligand binding.

The protein localises to the nucleus. In terms of biological role, putative nucleotidyltransferase required for several aspects of embryonic development including normal development of the eye. It is unclear whether it displays nucleotidyltransferase activity in vivo. Binds single-stranded RNA (ssRNA). This is Putative nucleotidyltransferase MAB21L1 (MAB21L1) from Bos taurus (Bovine).